We begin with the raw amino-acid sequence, 137 residues long: Large ribosomal subunit protein uL16 (137 aa).

Belongs to the universal ribosomal protein uL16 family. In terms of assembly, part of the 50S ribosomal subunit.

Binds 23S rRNA and is also seen to make contacts with the A and possibly P site tRNAs. The protein is Large ribosomal subunit protein uL16 of Mycoplasma capricolum subsp. capricolum (strain California kid / ATCC 27343 / NCTC 10154).